We begin with the raw amino-acid sequence, 364 residues long: UDP-N-acetylglucosamine--N-acetylmuramyl-(pentapeptide) pyrophosphoryl-undecaprenol N-acetylglucosamine transferase 1 (364 aa).

Residues 10–12 (TGG), asparagine 124, serine 195, isoleucine 250, and glutamine 295 contribute to the UDP-N-acetyl-alpha-D-glucosamine site.

Belongs to the glycosyltransferase 28 family. MurG subfamily.

The protein localises to the cell membrane. It catalyses the reaction di-trans,octa-cis-undecaprenyl diphospho-N-acetyl-alpha-D-muramoyl-L-alanyl-D-glutamyl-meso-2,6-diaminopimeloyl-D-alanyl-D-alanine + UDP-N-acetyl-alpha-D-glucosamine = di-trans,octa-cis-undecaprenyl diphospho-[N-acetyl-alpha-D-glucosaminyl-(1-&gt;4)]-N-acetyl-alpha-D-muramoyl-L-alanyl-D-glutamyl-meso-2,6-diaminopimeloyl-D-alanyl-D-alanine + UDP + H(+). It participates in cell wall biogenesis; peptidoglycan biosynthesis. Functionally, cell wall formation. Catalyzes the transfer of a GlcNAc subunit on undecaprenyl-pyrophosphoryl-MurNAc-pentapeptide (lipid intermediate I) to form undecaprenyl-pyrophosphoryl-MurNAc-(pentapeptide)GlcNAc (lipid intermediate II). In Bacillus thuringiensis subsp. konkukian (strain 97-27), this protein is UDP-N-acetylglucosamine--N-acetylmuramyl-(pentapeptide) pyrophosphoryl-undecaprenol N-acetylglucosamine transferase 1.